A 232-amino-acid chain; its full sequence is Lipoprotein-releasing system ATP-binding protein LolD (232 aa).

The ABC transporter domain maps to 11–232; it reads IEVTDLQRAF…LHDGRLIEEY (222 aa). Position 47–54 (47–54) interacts with ATP; the sequence is GPSGAGKS.

It belongs to the ABC transporter superfamily. Lipoprotein translocase (TC 3.A.1.125) family. As to quaternary structure, the complex is composed of two ATP-binding proteins (LolD) and two transmembrane proteins (LolC and LolE).

The protein resides in the cell inner membrane. Its function is as follows. Part of the ABC transporter complex LolCDE involved in the translocation of mature outer membrane-directed lipoproteins, from the inner membrane to the periplasmic chaperone, LolA. Responsible for the formation of the LolA-lipoprotein complex in an ATP-dependent manner. The sequence is that of Lipoprotein-releasing system ATP-binding protein LolD from Zymomonas mobilis subsp. mobilis (strain ATCC 31821 / ZM4 / CP4).